A 299-amino-acid polypeptide reads, in one-letter code: Protein N-terminal and lysine N-methyltransferase EFM7 (299 aa).

Residues Trp74, 100–102, Asp122, Trp155, and Ser178 contribute to the S-adenosyl-L-methionine site; that span reads GAG.

It belongs to the class I-like SAM-binding methyltransferase superfamily. EFM7 family.

The protein localises to the cytoplasm. Its function is as follows. S-adenosyl-L-methionine-dependent protein methyltransferase that trimethylates the N-terminal glycine 'Gly-2' of elongation factor 1-alpha, before also catalyzing the mono- and dimethylation of 'Lys-3'. The sequence is that of Protein N-terminal and lysine N-methyltransferase EFM7 from Cryptococcus neoformans var. neoformans serotype D (strain B-3501A) (Filobasidiella neoformans).